A 336-amino-acid chain; its full sequence is F420-dependent glucose-6-phosphate dehydrogenase (336 aa).

Coenzyme F420-(gamma-Glu)n is bound at residue aspartate 40. The active-site Proton donor is the histidine 41. Coenzyme F420-(gamma-Glu)n contacts are provided by residues threonine 77 and 108-109 (TG). Glutamate 110 acts as the Proton acceptor in catalysis. Residues asparagine 113, 176 to 177 (SG), and 179 to 180 (AA) each bind coenzyme F420-(gamma-Glu)n. Substrate contacts are provided by threonine 194, lysine 197, lysine 258, and arginine 282.

This sequence belongs to the F420-dependent glucose-6-phosphate dehydrogenase family. As to quaternary structure, homodimer.

The enzyme catalyses oxidized coenzyme F420-(gamma-L-Glu)(n) + D-glucose 6-phosphate + H(+) = 6-phospho-D-glucono-1,5-lactone + reduced coenzyme F420-(gamma-L-Glu)(n). Catalyzes the coenzyme F420-dependent oxidation of glucose 6-phosphate (G6P) to 6-phosphogluconolactone. The protein is F420-dependent glucose-6-phosphate dehydrogenase of Microbacterium testaceum (strain StLB037).